A 250-amino-acid polypeptide reads, in one-letter code: Cobalt transport protein CbiM (250 aa).

Residues M1–A24 form the signal peptide. Helical transmembrane passes span L32–I52, M67–V87, L99–F119, L122–M142, V161–Q181, and I203–F223.

This sequence belongs to the CbiM family. In terms of assembly, forms an energy-coupling factor (ECF) transporter complex composed of an ATP-binding protein (A component, CbiO), a transmembrane protein (T component, CbiQ) and 2 possible substrate-capture proteins (S components, CbiM and CbiN) of unknown stoichimetry.

It is found in the cell membrane. Its pathway is cofactor biosynthesis; adenosylcobalamin biosynthesis. Its function is as follows. Part of the energy-coupling factor (ECF) transporter complex CbiMNOQ involved in cobalt import. The sequence is that of Cobalt transport protein CbiM from Desulforamulus reducens (strain ATCC BAA-1160 / DSM 100696 / MI-1) (Desulfotomaculum reducens).